Consider the following 597-residue polypeptide: Elongation factor 4 (597 aa).

Residues 2–184 enclose the tr-type G domain; it reads QHIRNFSIIA…AVISRIPPPK (183 aa). GTP is bound by residues 14–19 and 131–134; these read DHGKST and NKID.

This sequence belongs to the TRAFAC class translation factor GTPase superfamily. Classic translation factor GTPase family. LepA subfamily.

Its subcellular location is the cell inner membrane. It carries out the reaction GTP + H2O = GDP + phosphate + H(+). In terms of biological role, required for accurate and efficient protein synthesis under certain stress conditions. May act as a fidelity factor of the translation reaction, by catalyzing a one-codon backward translocation of tRNAs on improperly translocated ribosomes. Back-translocation proceeds from a post-translocation (POST) complex to a pre-translocation (PRE) complex, thus giving elongation factor G a second chance to translocate the tRNAs correctly. Binds to ribosomes in a GTP-dependent manner. The sequence is that of Elongation factor 4 from Nitrosospira multiformis (strain ATCC 25196 / NCIMB 11849 / C 71).